We begin with the raw amino-acid sequence, 295 residues long: Small ribosomal subunit protein uS2 (295 aa).

The interval 273–295 is disordered; it reads WAASSAPAAETLADPAADPSVKW. Positions 274-295 are enriched in low complexity; it reads AASSAPAAETLADPAADPSVKW.

The protein belongs to the universal ribosomal protein uS2 family. In terms of assembly, component of the small ribosomal subunit. Mature ribosomes consist of a small (40S) and a large (60S) subunit. The 40S subunit contains about 33 different proteins and 1 molecule of RNA (18S). The 60S subunit contains about 49 different proteins and 3 molecules of RNA (25S, 5.8S and 5S). Interacts with RPS21.

It is found in the cytoplasm. Required for the assembly and/or stability of the 40S ribosomal subunit. Required for the processing of the 20S rRNA-precursor to mature 18S rRNA in a late step of the maturation of 40S ribosomal subunits. The sequence is that of Small ribosomal subunit protein uS2 from Paracoccidioides lutzii (strain ATCC MYA-826 / Pb01) (Paracoccidioides brasiliensis).